The sequence spans 446 residues: N-succinylarginine dihydrolase (446 aa).

Residues 19–28, Asn110, and 137–138 contribute to the substrate site; these read AGLSFGNVAS and HR. Residue Glu174 is part of the active site. Arg213 provides a ligand contact to substrate. Residue His249 is part of the active site. 2 residues coordinate substrate: Asp251 and Asn364. The active-site Nucleophile is the Cys370.

Belongs to the succinylarginine dihydrolase family. As to quaternary structure, homodimer.

It catalyses the reaction N(2)-succinyl-L-arginine + 2 H2O + 2 H(+) = N(2)-succinyl-L-ornithine + 2 NH4(+) + CO2. It participates in amino-acid degradation; L-arginine degradation via AST pathway; L-glutamate and succinate from L-arginine: step 2/5. Functionally, catalyzes the hydrolysis of N(2)-succinylarginine into N(2)-succinylornithine, ammonia and CO(2). This Burkholderia orbicola (strain MC0-3) protein is N-succinylarginine dihydrolase.